The chain runs to 430 residues: Phosphomethylpyrimidine synthase 2 (430 aa).

Residues asparagine 66, methionine 95, tyrosine 124, histidine 164, serine 186–glycine 188, aspartate 227–arginine 230, and glutamate 266 each bind substrate. Histidine 270 is a Zn(2+) binding site. Residue tyrosine 293 participates in substrate binding. Histidine 334 is a binding site for Zn(2+). Residues cysteine 411, cysteine 414, and cysteine 418 each coordinate [4Fe-4S] cluster.

It belongs to the ThiC family. In terms of assembly, homodimer. The cofactor is [4Fe-4S] cluster.

It carries out the reaction 5-amino-1-(5-phospho-beta-D-ribosyl)imidazole + S-adenosyl-L-methionine = 4-amino-2-methyl-5-(phosphooxymethyl)pyrimidine + CO + 5'-deoxyadenosine + formate + L-methionine + 3 H(+). It functions in the pathway cofactor biosynthesis; thiamine diphosphate biosynthesis. In terms of biological role, catalyzes the synthesis of the hydroxymethylpyrimidine phosphate (HMP-P) moiety of thiamine from aminoimidazole ribotide (AIR) in a radical S-adenosyl-L-methionine (SAM)-dependent reaction. This chain is Phosphomethylpyrimidine synthase 2, found in Syntrophotalea carbinolica (strain DSM 2380 / NBRC 103641 / GraBd1) (Pelobacter carbinolicus).